The chain runs to 275 residues: Adenosylcobinamide-GDP ribazoletransferase (275 aa).

The next 6 membrane-spanning stretches (helical) occupy residues 52–72 (VVGV…GVLG), 73–93 (VTPL…NRMM), 126–146 (MGFS…AALV), 181–201 (FGAM…LVAL), 208–228 (VAVW…GIIA), and 251–271 (IGAG…VAVA).

Belongs to the CobS family. Requires Mg(2+) as cofactor.

It localises to the cell membrane. The enzyme catalyses alpha-ribazole + adenosylcob(III)inamide-GDP = adenosylcob(III)alamin + GMP + H(+). It carries out the reaction alpha-ribazole 5'-phosphate + adenosylcob(III)inamide-GDP = adenosylcob(III)alamin 5'-phosphate + GMP + H(+). The protein operates within cofactor biosynthesis; adenosylcobalamin biosynthesis; adenosylcobalamin from cob(II)yrinate a,c-diamide: step 7/7. Functionally, joins adenosylcobinamide-GDP and alpha-ribazole to generate adenosylcobalamin (Ado-cobalamin). Also synthesizes adenosylcobalamin 5'-phosphate from adenosylcobinamide-GDP and alpha-ribazole 5'-phosphate. This Corynebacterium efficiens (strain DSM 44549 / YS-314 / AJ 12310 / JCM 11189 / NBRC 100395) protein is Adenosylcobinamide-GDP ribazoletransferase.